The primary structure comprises 615 residues: DNA mismatch repair protein MutL (615 aa).

The segment at R369–Y397 is disordered. Positions P378–P391 are enriched in low complexity.

Belongs to the DNA mismatch repair MutL/HexB family.

Functionally, this protein is involved in the repair of mismatches in DNA. It is required for dam-dependent methyl-directed DNA mismatch repair. May act as a 'molecular matchmaker', a protein that promotes the formation of a stable complex between two or more DNA-binding proteins in an ATP-dependent manner without itself being part of a final effector complex. This Escherichia coli (strain SMS-3-5 / SECEC) protein is DNA mismatch repair protein MutL.